The following is a 323-amino-acid chain: tRNA dimethylallyltransferase (323 aa).

12–19 (GPTAAGKT) contacts ATP. 14–19 (TAAGKT) contributes to the substrate binding site. 2 interaction with substrate tRNA regions span residues 37 to 40 (DSAL) and 161 to 165 (QRLSR).

The protein belongs to the IPP transferase family. As to quaternary structure, monomer. Mg(2+) serves as cofactor.

It carries out the reaction adenosine(37) in tRNA + dimethylallyl diphosphate = N(6)-dimethylallyladenosine(37) in tRNA + diphosphate. Functionally, catalyzes the transfer of a dimethylallyl group onto the adenine at position 37 in tRNAs that read codons beginning with uridine, leading to the formation of N6-(dimethylallyl)adenosine (i(6)A). The polypeptide is tRNA dimethylallyltransferase (Pseudomonas fluorescens (strain Pf0-1)).